The following is a 637-amino-acid chain: 1-deoxy-D-xylulose-5-phosphate synthase 1 (637 aa).

Residues histidine 74 and 115–117 (GHS) each bind thiamine diphosphate. Aspartate 146 provides a ligand contact to Mg(2+). Thiamine diphosphate contacts are provided by residues 147–148 (GS), asparagine 175, tyrosine 286, and glutamate 368. Asparagine 175 is a binding site for Mg(2+).

Belongs to the transketolase family. DXPS subfamily. In terms of assembly, homodimer. It depends on Mg(2+) as a cofactor. Requires thiamine diphosphate as cofactor.

It catalyses the reaction D-glyceraldehyde 3-phosphate + pyruvate + H(+) = 1-deoxy-D-xylulose 5-phosphate + CO2. The protein operates within metabolic intermediate biosynthesis; 1-deoxy-D-xylulose 5-phosphate biosynthesis; 1-deoxy-D-xylulose 5-phosphate from D-glyceraldehyde 3-phosphate and pyruvate: step 1/1. In terms of biological role, catalyzes the acyloin condensation reaction between C atoms 2 and 3 of pyruvate and glyceraldehyde 3-phosphate to yield 1-deoxy-D-xylulose-5-phosphate (DXP). This chain is 1-deoxy-D-xylulose-5-phosphate synthase 1, found in Geobacter sulfurreducens (strain ATCC 51573 / DSM 12127 / PCA).